Consider the following 378-residue polypeptide: MKFPAFITAIISIASLSSAISVSGAAEGFAKGVTGGGSATPVYPSTISELVSYLKDSQPRVVVLTKTFDFRGSEGTTTGTGCAPWGTASNCQLAINKDNWCTNYQPNAPSASVSYDNAGVLGITITSDKTLIGQGSSGVIKGKGIRIVSGAKNVIIQNIAITDINPKYVWGGDAITLNNCDMVWIDHVTTARIGRQHLVLGTSASNRVTVSNSYFNGVSDYSATCNGYHYWGIYFAGSNDMVTLKGNYIYHMSGRSPKVQSNTLLHAVNNYWYDISGHAFEIGAGGYVLAEGNVFQNVPTILEEDDGQLFTSPNSNTNQVCSTYLGHVCQVNGFGSSGTFSSADTGFLVNFQGKNVASASAYTVAQSSVPSNAGQGKL.

Positions 1–19 (MKFPAFITAIISIASLSSA) are cleaved as a signal peptide. 2 disulfide bridges follow: Cys82-Cys101 and Cys91-Cys225. Arg255 is an active-site residue. Cysteines 321 and 329 form a disulfide.

This sequence belongs to the polysaccharide lyase 1 family.

The protein resides in the secreted. The enzyme catalyses Eliminative cleavage of (1-&gt;4)-alpha-D-galacturonan methyl ester to give oligosaccharides with 4-deoxy-6-O-methyl-alpha-D-galact-4-enuronosyl groups at their non-reducing ends.. Functionally, pectinolytic enzymes consist of four classes of enzymes: pectin lyase, polygalacturonase, pectin methylesterase and rhamnogalacturonase. Among pectinolytic enzymes, pectin lyase is the most important in depolymerization of pectin, since it cleaves internal glycosidic bonds of highly methylated pectins. The polypeptide is Probable pectin lyase A (pelA) (Aspergillus terreus (strain NIH 2624 / FGSC A1156)).